The sequence spans 223 residues: UPF0441 protein YgiB (223 aa).

A compositionally biased stretch (low complexity) spans 178-195 (TVPKTAMAPKPATTTTVT). Residues 178–223 (TVPKTAMAPKPATTTTVTRGGFGESVAKQSTMQRSATGTSSRSMGG) form a disordered region. Positions 204–223 (AKQSTMQRSATGTSSRSMGG) are enriched in polar residues.

Belongs to the UPF0441 family.

The chain is UPF0441 protein YgiB from Shigella boydii serotype 18 (strain CDC 3083-94 / BS512).